The primary structure comprises 156 residues: Translationally controlled tumor protein 2 (156 aa).

One can recognise a TCTP domain in the interval M1–C156.

This sequence belongs to the TCTP family. As to expression, expressed in stems, cauline leaves, minor veins of rosette leaves, roots, lateral root primordia, vascular tissues of petioles and inflorescences, base of siliques, papillae and ovules. Not detected in root meristems, anthers or seeds. Expressed in stomata, trichomes and root cortex.

It is found in the nucleus. It localises to the cytoplasm. Its function is as follows. Regulates proliferation. Induces whole plant regeneration when expressed in heterologous systems. Involved in root growth and lateral root development, with a probable role in cell reprogramming. The long-distance transport of TCTP RNA and/or protein in plants may have an important role in regulation of growth and development. The polypeptide is Translationally controlled tumor protein 2 (Arabidopsis thaliana (Mouse-ear cress)).